The primary structure comprises 189 residues: Small ribosomal subunit protein uS5 (189 aa).

The region spanning Phe-20–Val-83 is the S5 DRBM domain.

This sequence belongs to the universal ribosomal protein uS5 family. In terms of assembly, part of the 30S ribosomal subunit. Contacts proteins S4 and S8.

Functionally, with S4 and S12 plays an important role in translational accuracy. In terms of biological role, located at the back of the 30S subunit body where it stabilizes the conformation of the head with respect to the body. In Methylocella silvestris (strain DSM 15510 / CIP 108128 / LMG 27833 / NCIMB 13906 / BL2), this protein is Small ribosomal subunit protein uS5.